Consider the following 318-residue polypeptide: CRISPR-associated protein Cas7/Csa2 1 (318 aa).

The protein belongs to the CRISPR-associated protein Cas7/Cst2/DevR family. Subtype I-a/Apern subfamily. In terms of assembly, part of the aCascade ribonucleoprotein complex, minimally composed of Csa2 and Cas5a, which binds crRNA. Other possible components of aCascade in strain P1 are Cas6b (SSO1437) and Csa5 (SSO1443), while SSO1399, Cas5b (SSO1400) and SSO1401 have sometimes been seen weakly associated. Csa2 is probably the major RNA-binding subunit. The Csa2-Cas5a-crRNA complex also binds target DNA homologous to crRNA, probably forming an R-loop. Purified aCascade forms a filament about 6 nm in width.

Its function is as follows. CRISPR (clustered regularly interspaced short palindromic repeat) is an adaptive immune system that provides protection against mobile genetic elements (viruses, transposable elements and conjugative plasmids). CRISPR clusters contain spacers, sequences complementary to antecedent mobile elements, and target invading nucleic acids. CRISPR clusters are transcribed and processed into CRISPR RNA (crRNA). This Saccharolobus solfataricus (strain ATCC 35092 / DSM 1617 / JCM 11322 / P2) (Sulfolobus solfataricus) protein is CRISPR-associated protein Cas7/Csa2 1 (cas7a).